The chain runs to 219 residues: Mediator of RNA polymerase II transcription subunit 21 (219 aa).

Residues 86 to 125 adopt a coiled-coil conformation; sequence SAEEQLHKIDSLQKKLVDIEDEKIHAIKKKDDLLKQVDDL. Positions 141–219 are disordered; that stretch reads SLAPENVQED…ISESISPGKI (79 aa). 2 stretches are compositionally biased toward basic and acidic residues: residues 166 to 181 and 191 to 204; these read IEQKIANEKIESKIEG and SDSKSADSELFMDK. The segment covering 210 to 219 has biased composition (polar residues); it reads ISESISPGKI.

The protein belongs to the Mediator complex subunit 21 family. In terms of assembly, component of the Mediator complex.

It is found in the nucleus. Its function is as follows. Component of the Mediator complex, a coactivator involved in the regulated transcription of nearly all RNA polymerase II-dependent genes. Mediator functions as a bridge to convey information from gene-specific regulatory proteins to the basal RNA polymerase II transcription machinery. Mediator is recruited to promoters by direct interactions with regulatory proteins and serves as a scaffold for the assembly of a functional preinitiation complex with RNA polymerase II and the general transcription factors. In Candida glabrata (strain ATCC 2001 / BCRC 20586 / JCM 3761 / NBRC 0622 / NRRL Y-65 / CBS 138) (Yeast), this protein is Mediator of RNA polymerase II transcription subunit 21 (SRB7).